A 441-amino-acid chain; its full sequence is Probable cyclic di-GMP phosphodiesterase VC_1348 (441 aa).

Positions 72–187 (TILIVDDSPD…LLKSRVHTHL (116 aa)) constitute a Response regulatory domain. Position 120 is a 4-aspartylphosphate (Asp-120). One can recognise an HD-GYP domain in the interval 214–425 (LDRMQDAVVF…FIDIAQKFAD (212 aa)).

The enzyme catalyses 3',3'-c-di-GMP + 2 H2O = 2 GMP + 2 H(+). Functionally, probable phosphodiesterase (PDE) that catalyzes the hydrolysis of cyclic diguanylate (c-di-GMP). Increases motility and decreases biofilm formation in vivo. This is Probable cyclic di-GMP phosphodiesterase VC_1348 from Vibrio cholerae serotype O1 (strain ATCC 39315 / El Tor Inaba N16961).